The primary structure comprises 214 residues: Lazarillo protein (214 aa).

The signal sequence occupies residues 1–21 (MIRRGLLSVTAALVLLSVSCS). N-linked (GlcNAc...) asparagine glycans are attached at residues Asn38, Asn74, Asn84, Asn90, Asn130, Asn158, and Asn161. Residue Ala192 is the site of GPI-anchor amidated alanine attachment. A propeptide spans 193-214 (GAEHVVGAMLSVAIASLFALLH) (removed in mature form).

The protein belongs to the calycin superfamily. Lipocalin family. Post-translationally, N-glycosylated. Contains disulfide bonds. Expressed by a subset of neuroblasts, ganglion mother cells and neurons of the CNS; by all sensory neurons of the PNS.

It localises to the cell membrane. Functionally, putative role in axonal outgrowth and guidance, required for the navigation of identified commissural neurons. Could be a receptor the midline morphogen. The sequence is that of Lazarillo protein from Schistocerca americana (American grasshopper).